The primary structure comprises 20 residues: GVFTFEDESTSTVAPAKLYK.

Belongs to the BetVI family.

This Lupinus luteus (European yellow lupine) protein is Protein PR-L6.